Reading from the N-terminus, the 69-residue chain is uncharacterized protein (69 aa).

The next 2 helical transmembrane spans lie at 15–35 (LIIG…ICYV) and 36–56 (LYII…IPKT).

It is found in the cell membrane. This is an uncharacterized protein from Methanocaldococcus jannaschii (strain ATCC 43067 / DSM 2661 / JAL-1 / JCM 10045 / NBRC 100440) (Methanococcus jannaschii).